A 415-amino-acid polypeptide reads, in one-letter code: MTDKLQPLRGMKDLLPDDYKVHDYIIKKAKEVGELYGYKQMSTPILEYTKVFNRSMGESSDVISKEIYSFLDKSDESVALRPEFTAGIVRAFISNGLQHKLPLKLFSTGPVFRYDRPQAGRQRQFHQLNYEYLGAKGAISDAETLKLAVDILQSLEVLADTTLELNSLGCSQSRSTYQQKLVEYLNDFKDELSEDSKIRLTKNPMRILDSKSEVDQKIVANAPVLSEYYTEESKKYFEELLKYLDILGVKYTINARLVRGLDYYCHTAFEFTTTKLGSQSTILAGGRYDGLSRIMGNNDEIPAIGFAAGIERIALMREYNIDSVTPIFVLPIGENNISHSLKIADQLRLHNIPVLIEVSGKMAKRMQRALNENAKFIVFIGDEEQANNNLKIKDLEKQEEYILDFSKTIELLKKS.

The protein belongs to the class-II aminoacyl-tRNA synthetase family. In terms of assembly, homodimer.

It is found in the cytoplasm. It carries out the reaction tRNA(His) + L-histidine + ATP = L-histidyl-tRNA(His) + AMP + diphosphate + H(+). The polypeptide is Histidine--tRNA ligase (Rickettsia bellii (strain RML369-C)).